We begin with the raw amino-acid sequence, 311 residues long: MKHLTVKALVLQFNDCIQLIDGKNNIDNVITIPGLKRSVFELLGLFCKPIGSVAILGKREFIFLNQKPVEQQKKIIANLLKLKPPAVILTKSFLDCGVLLAVNQTYQVPILKTNLFSTELSFTVETYINEQFATVQKLHGVLLEIFGVGVFLEGKSGIGKSESALDLINKNHLLIGDDAIEIYRLGNRLFGRAQALAKGFMEIRGLGIINIERAYGLQITKEQTEIQLAISLLSLEEKNNASFERLGSDLKLKNLLGVKISYYQIPISSGRKTSEIIESAVIDFKLKKSGYNSANEFILKQRAMLEEQTDE.

Catalysis depends on residues histidine 139 and lysine 160. Glycine 154 to serine 161 is a binding site for ATP. Serine 161 is a Mg(2+) binding site. Aspartate 178 (proton acceptor; for phosphorylation activity. Proton donor; for dephosphorylation activity) is an active-site residue. The tract at residues methionine 201–asparagine 210 is important for the catalytic mechanism of both phosphorylation and dephosphorylation. Position 202 (glutamate 202) interacts with Mg(2+). Residue arginine 245 is part of the active site. The segment at proline 266 to arginine 271 is important for the catalytic mechanism of dephosphorylation.

The protein belongs to the HPrK/P family. In terms of assembly, homohexamer. It depends on Mg(2+) as a cofactor.

The catalysed reaction is [HPr protein]-L-serine + ATP = [HPr protein]-O-phospho-L-serine + ADP + H(+). The enzyme catalyses [HPr protein]-O-phospho-L-serine + phosphate + H(+) = [HPr protein]-L-serine + diphosphate. In terms of biological role, catalyzes the ATP- as well as the pyrophosphate-dependent phosphorylation of a specific serine residue in HPr, a phosphocarrier protein of the phosphoenolpyruvate-dependent sugar phosphotransferase system (PTS). HprK/P also catalyzes the pyrophosphate-producing, inorganic phosphate-dependent dephosphorylation (phosphorolysis) of seryl-phosphorylated HPr (P-Ser-HPr). In Mycoplasma genitalium (strain ATCC 33530 / DSM 19775 / NCTC 10195 / G37) (Mycoplasmoides genitalium), this protein is HPr kinase/phosphorylase (hprK).